Here is a 358-residue protein sequence, read N- to C-terminus: tRNA-specific 2-thiouridylase MnmA (358 aa).

ATP is bound by residues 6-13 (AMSGGVDS) and L32. The active-site Nucleophile is C101. C101 and C193 are joined by a disulfide. Position 125 (G125) interacts with ATP. An interaction with tRNA region spans residues 143-145 (KDQ). The Cysteine persulfide intermediate role is filled by C193.

It belongs to the MnmA/TRMU family.

The protein localises to the cytoplasm. It catalyses the reaction S-sulfanyl-L-cysteinyl-[protein] + uridine(34) in tRNA + AH2 + ATP = 2-thiouridine(34) in tRNA + L-cysteinyl-[protein] + A + AMP + diphosphate + H(+). In terms of biological role, catalyzes the 2-thiolation of uridine at the wobble position (U34) of tRNA, leading to the formation of s(2)U34. This chain is tRNA-specific 2-thiouridylase MnmA, found in Mycobacterium leprae (strain Br4923).